A 554-amino-acid polypeptide reads, in one-letter code: CTP synthase (554 aa).

The tract at residues 1–265 (MTPLIFVTGG…DEIVIDQFKL (265 aa)) is amidoligase domain. Ser13 serves as a coordination point for CTP. Residue Ser13 coordinates UTP. ATP is bound by residues 14–19 (SLGKGI) and Asp71. Positions 71 and 139 each coordinate Mg(2+). CTP contacts are provided by residues 146-148 (DIE), 186-191 (KTKPTQ), and Lys222. Residues 186-191 (KTKPTQ) and Lys222 each bind UTP. Positions 292-545 (TIAVVGKYVD…VKASRARKAG (254 aa)) constitute a Glutamine amidotransferase type-1 domain. Gly353 contacts L-glutamine. Catalysis depends on Cys380, which acts as the Nucleophile; for glutamine hydrolysis. L-glutamine contacts are provided by residues 381 to 384 (YGMQ), Glu404, and Arg471. Active-site residues include His518 and Glu520.

Belongs to the CTP synthase family. Homotetramer.

The enzyme catalyses UTP + L-glutamine + ATP + H2O = CTP + L-glutamate + ADP + phosphate + 2 H(+). It catalyses the reaction L-glutamine + H2O = L-glutamate + NH4(+). It carries out the reaction UTP + NH4(+) + ATP = CTP + ADP + phosphate + 2 H(+). Its pathway is pyrimidine metabolism; CTP biosynthesis via de novo pathway; CTP from UDP: step 2/2. Its activity is regulated as follows. Allosterically activated by GTP, when glutamine is the substrate; GTP has no effect on the reaction when ammonia is the substrate. The allosteric effector GTP functions by stabilizing the protein conformation that binds the tetrahedral intermediate(s) formed during glutamine hydrolysis. Inhibited by the product CTP, via allosteric rather than competitive inhibition. Functionally, catalyzes the ATP-dependent amination of UTP to CTP with either L-glutamine or ammonia as the source of nitrogen. Regulates intracellular CTP levels through interactions with the four ribonucleotide triphosphates. This Xylella fastidiosa (strain M23) protein is CTP synthase.